The primary structure comprises 113 residues: Retrotransposon Gag-like protein 8B (113 aa).

It belongs to the FAM127 family.

This is Retrotransposon Gag-like protein 8B (RTL8B) from Homo sapiens (Human).